The chain runs to 116 residues: Phosphoribosyl-AMP cyclohydrolase (116 aa).

A Mg(2+)-binding site is contributed by Asp-78. Cys-79 is a binding site for Zn(2+). 2 residues coordinate Mg(2+): Asp-80 and Asp-82. 2 residues coordinate Zn(2+): Cys-95 and Cys-102.

It belongs to the PRA-CH family. As to quaternary structure, homodimer. It depends on Mg(2+) as a cofactor. The cofactor is Zn(2+).

It localises to the cytoplasm. The enzyme catalyses 1-(5-phospho-beta-D-ribosyl)-5'-AMP + H2O = 1-(5-phospho-beta-D-ribosyl)-5-[(5-phospho-beta-D-ribosylamino)methylideneamino]imidazole-4-carboxamide. The protein operates within amino-acid biosynthesis; L-histidine biosynthesis; L-histidine from 5-phospho-alpha-D-ribose 1-diphosphate: step 3/9. Catalyzes the hydrolysis of the adenine ring of phosphoribosyl-AMP. The sequence is that of Phosphoribosyl-AMP cyclohydrolase from Acidiphilium cryptum (strain JF-5).